A 216-amino-acid polypeptide reads, in one-letter code: FMN-dependent NADH:quinone oxidoreductase (216 aa).

FMN contacts are provided by residues 15–17 and 139–142; these read SVS and SRGG.

This sequence belongs to the azoreductase type 1 family. Homodimer. It depends on FMN as a cofactor.

It carries out the reaction 2 a quinone + NADH + H(+) = 2 a 1,4-benzosemiquinone + NAD(+). It catalyses the reaction N,N-dimethyl-1,4-phenylenediamine + anthranilate + 2 NAD(+) = 2-(4-dimethylaminophenyl)diazenylbenzoate + 2 NADH + 2 H(+). In terms of biological role, quinone reductase that provides resistance to thiol-specific stress caused by electrophilic quinones. Also exhibits azoreductase activity. Catalyzes the reductive cleavage of the azo bond in aromatic azo compounds to the corresponding amines. This Acidovorax ebreus (strain TPSY) (Diaphorobacter sp. (strain TPSY)) protein is FMN-dependent NADH:quinone oxidoreductase.